The chain runs to 188 residues: PRA1 family protein F3 (188 aa).

A run of 4 helical transmembrane segments spans residues 74–94, 95–115, 123–143, and 145–165; these read IVVLIVIFFSLIWHPTSLIVF, TVLVVVWIFLYFLRDEPIKLF, TVLIVLSVLTVVLLLLTNATF, and IVGALVTGAVLVLIHSVVRKT.

The protein belongs to the PRA1 family. In terms of assembly, interacts with PRA1F2 and PRA1D. Interacts with ACD11 and BPA1. Expressed in lateral roots, lateral root caps and columella cells.

The protein localises to the endoplasmic reticulum membrane. It is found in the membrane. The protein resides in the cytoplasm. May be involved in both secretory and endocytic intracellular trafficking in the endosomal/prevacuolar compartments. The sequence is that of PRA1 family protein F3 from Arabidopsis thaliana (Mouse-ear cress).